The chain runs to 290 residues: ATP synthase gamma chain (290 aa).

The protein belongs to the ATPase gamma chain family. As to quaternary structure, F-type ATPases have 2 components, CF(1) - the catalytic core - and CF(0) - the membrane proton channel. CF(1) has five subunits: alpha(3), beta(3), gamma(1), delta(1), epsilon(1). CF(0) has three main subunits: a, b and c.

Its subcellular location is the cell membrane. Its function is as follows. Produces ATP from ADP in the presence of a proton gradient across the membrane. The gamma chain is believed to be important in regulating ATPase activity and the flow of protons through the CF(0) complex. The sequence is that of ATP synthase gamma chain from Roseiflexus sp. (strain RS-1).